The chain runs to 153 residues: Cofilin (153 aa).

One can recognise an ADF-H domain in the interval 4–148 (SGATVSQDCI…EYDSILKTVS (145 aa)).

The protein belongs to the actin-binding proteins ADF family.

It is found in the cytoplasm. Its subcellular location is the cytoskeleton. The protein resides in the nucleus matrix. Its function is as follows. Controls reversibly actin polymerization and depolymerization in a pH-sensitive manner. It has the ability to bind G- and F-actin in a 1:1 ratio of cofilin to actin. Binding to F-actin is regulated by tropomyosin. It is the major component of intranuclear and cytoplasmic actin rods. Required for accumulation of actin at the cell division site via depolymerizing actin at the cell ends. In association with myosin II has a role in the assembly of the contractile ring via severing actin filaments. Involved in the maintenance of the contractile ring once formed. In association with profilin and capping protein, has a role in the mitotic reorganization of the actin cytoskeleton. This chain is Cofilin (COF1), found in Gibberella zeae (strain ATCC MYA-4620 / CBS 123657 / FGSC 9075 / NRRL 31084 / PH-1) (Wheat head blight fungus).